Here is a 270-residue protein sequence, read N- to C-terminus: 4-hydroxy-tetrahydrodipicolinate reductase (270 aa).

Residues 11 to 16 and Glu37 contribute to the NAD(+) site; that span reads GASGRM. Arg38 contributes to the NADP(+) binding site. NAD(+)-binding positions include 101 to 103 and 125 to 128; these read GTT and APNM. His158 acts as the Proton donor/acceptor in catalysis. A (S)-2,3,4,5-tetrahydrodipicolinate-binding site is contributed by His159. Lys162 (proton donor) is an active-site residue. Residue 168 to 169 coordinates (S)-2,3,4,5-tetrahydrodipicolinate; the sequence is GT.

It belongs to the DapB family.

It is found in the cytoplasm. The catalysed reaction is (S)-2,3,4,5-tetrahydrodipicolinate + NAD(+) + H2O = (2S,4S)-4-hydroxy-2,3,4,5-tetrahydrodipicolinate + NADH + H(+). The enzyme catalyses (S)-2,3,4,5-tetrahydrodipicolinate + NADP(+) + H2O = (2S,4S)-4-hydroxy-2,3,4,5-tetrahydrodipicolinate + NADPH + H(+). The protein operates within amino-acid biosynthesis; L-lysine biosynthesis via DAP pathway; (S)-tetrahydrodipicolinate from L-aspartate: step 4/4. Catalyzes the conversion of 4-hydroxy-tetrahydrodipicolinate (HTPA) to tetrahydrodipicolinate. The sequence is that of 4-hydroxy-tetrahydrodipicolinate reductase from Shewanella amazonensis (strain ATCC BAA-1098 / SB2B).